The following is a 126-amino-acid chain: Histone H2B 5 (126 aa).

Residues 1 to 12 (MPEPAKSAPAPK) show a composition bias toward low complexity. The segment at 1 to 35 (MPEPAKSAPAPKKGSKKAVTKTQKKGDKKRRKSRK) is disordered. Lysine 6 and lysine 13 each carry N6-acetyllysine. Positions 13 to 34 (KGSKKAVTKTQKKGDKKRRKSR) are enriched in basic residues. Serine 15 carries the post-translational modification Phosphoserine. N6-acetyllysine is present on residues lysine 16 and lysine 21. A glycan (O-linked (GlcNAc) serine) is linked at serine 113. Lysine 121 participates in a covalent cross-link: Glycyl lysine isopeptide (Lys-Gly) (interchain with G-Cter in ubiquitin).

It belongs to the histone H2B family. The nucleosome is a histone octamer containing two molecules each of H2A, H2B, H3 and H4 assembled in one H3-H4 heterotetramer and two H2A-H2B heterodimers. The octamer wraps approximately 147 bp of DNA. In terms of processing, monoubiquitination of Lys-121 by the BRE1 gives a specific tag for epigenetic transcriptional activation and is also prerequisite for histone H3 'Lys-4' and 'Lys-79' methylation. Phosphorylated on Ser-15 during apoptosis; which facilitates apoptotic chromatin condensation. Post-translationally, glcNAcylation at Ser-113 promotes monoubiquitination of Lys-121. It fluctuates in response to extracellular glucose, and associates with transcribed genes.

The protein resides in the nucleus. Its subcellular location is the chromosome. Its function is as follows. Core component of nucleosome. Nucleosomes wrap and compact DNA into chromatin, limiting DNA accessibility to the cellular machineries which require DNA as a template. Histones thereby play a central role in transcription regulation, DNA repair, DNA replication and chromosomal stability. DNA accessibility is regulated via a complex set of post-translational modifications of histones, also called histone code, and nucleosome remodeling. This chain is Histone H2B 5 (H2B-V), found in Gallus gallus (Chicken).